The chain runs to 60 residues: UPF0434 protein Ent638_1436 (60 aa).

This sequence belongs to the UPF0434 family.

The protein is UPF0434 protein Ent638_1436 of Enterobacter sp. (strain 638).